A 191-amino-acid chain; its full sequence is GDP-mannose pyrophosphatase (191 aa).

Residues Tyr17, 38-40 (KRE), Arg67, and 85-87 (AGL) contribute to the GDP-alpha-D-mannose site. Residues 43-180 (DRGNGATILL…EIRDGKTVLL (138 aa)) form the Nudix hydrolase domain. Mg(2+)-binding residues include Ala85, Glu100, and Glu104. The short motif at 86-106 (GLLDNDEPEVCIRKEAIEETG) is the Nudix box element. Residues Glu104, Glu127, 150–151 (DE), and Lys176 contribute to the GDP-alpha-D-mannose site. Glu151 serves as a coordination point for Mg(2+).

Belongs to the Nudix hydrolase family. NudK subfamily. In terms of assembly, homodimer. The cofactor is Mg(2+).

The catalysed reaction is GDP-alpha-D-mannose + H2O = alpha-D-mannose 1-phosphate + GMP + 2 H(+). Nucleoside diphosphate sugar hydrolase that hydrolyzes GDP-mannose as its preferred substrate, yielding GMP and mannose-1-phosphate. The protein is GDP-mannose pyrophosphatase (nudK) of Escherichia coli (strain UTI89 / UPEC).